Reading from the N-terminus, the 407-residue chain is Phosphoglycerate kinase (407 aa).

Substrate contacts are provided by residues 27 to 29, arginine 43, 66 to 69, arginine 125, and arginine 165; these read DLN and HLGR. ATP-binding positions include lysine 215, glycine 303, glutamate 334, and 363 to 366; that span reads GGDS.

Belongs to the phosphoglycerate kinase family. Monomer.

It is found in the cytoplasm. The catalysed reaction is (2R)-3-phosphoglycerate + ATP = (2R)-3-phospho-glyceroyl phosphate + ADP. It participates in carbohydrate degradation; glycolysis; pyruvate from D-glyceraldehyde 3-phosphate: step 2/5. This chain is Phosphoglycerate kinase, found in Mycobacterium sp. (strain JLS).